Reading from the N-terminus, the 446-residue chain is Enolase (446 aa).

Residues His164 and Glu173 each contribute to the substrate site. The active-site Proton donor is Glu216. 3 residues coordinate Mg(2+): Asp251, Glu302, and Asp329. The substrate site is built by Glu302 and Asp329. The active-site Proton acceptor is the Lys354. Substrate-binding positions include 381-384 (SHRS) and Lys405.

This sequence belongs to the enolase family. Homodimer. The cofactor is Mg(2+).

The protein localises to the cytoplasm. The catalysed reaction is (2R)-2-phosphoglycerate = phosphoenolpyruvate + H2O. It functions in the pathway carbohydrate degradation; glycolysis; pyruvate from D-glyceraldehyde 3-phosphate: step 4/5. This Oryza sativa subsp. japonica (Rice) protein is Enolase (ENO1).